Reading from the N-terminus, the 172-residue chain is Small ribosomal subunit protein uS5 (172 aa).

The S5 DRBM domain occupies 7–70; sequence VVEHLVNVNR…QNAKKYMIEV (64 aa).

The protein belongs to the universal ribosomal protein uS5 family. As to quaternary structure, part of the 30S ribosomal subunit. Contacts proteins S4 and S8.

With S4 and S12 plays an important role in translational accuracy. Its function is as follows. Located at the back of the 30S subunit body where it stabilizes the conformation of the head with respect to the body. This is Small ribosomal subunit protein uS5 from Orientia tsutsugamushi (strain Boryong) (Rickettsia tsutsugamushi).